A 125-amino-acid chain; its full sequence is Fumarate reductase subunit D (125 aa).

3 consecutive transmembrane segments (helical) span residues 30–50, 60–80, and 105–125; these read FAMI…MGVI, VVSF…LALP, and IACY…IFML.

This sequence belongs to the FrdD family. Part of an enzyme complex containing four subunits: a flavoprotein (FrdA), an iron-sulfur protein (FrdB), and two hydrophobic anchor proteins (FrdC and FrdD).

The protein resides in the cell inner membrane. Its function is as follows. Anchors the catalytic components of the fumarate reductase complex to the cell membrane, binds quinones. This Vibrio vulnificus (strain YJ016) protein is Fumarate reductase subunit D.